Here is a 397-residue protein sequence, read N- to C-terminus: 8-amino-7-oxononanoate synthase (397 aa).

Arg-23 is a substrate binding site. A pyridoxal 5'-phosphate-binding site is contributed by 110–111; that stretch reads GY. His-135 serves as a coordination point for substrate. Ser-181, His-209, and Thr-237 together coordinate pyridoxal 5'-phosphate. An N6-(pyridoxal phosphate)lysine modification is found at Lys-240. Thr-354 contacts substrate.

It belongs to the class-II pyridoxal-phosphate-dependent aminotransferase family. BioF subfamily. As to quaternary structure, homodimer. The cofactor is pyridoxal 5'-phosphate.

It carries out the reaction 6-carboxyhexanoyl-[ACP] + L-alanine + H(+) = (8S)-8-amino-7-oxononanoate + holo-[ACP] + CO2. Its pathway is cofactor biosynthesis; biotin biosynthesis. In terms of biological role, catalyzes the decarboxylative condensation of pimeloyl-[acyl-carrier protein] and L-alanine to produce 8-amino-7-oxononanoate (AON), [acyl-carrier protein], and carbon dioxide. The protein is 8-amino-7-oxononanoate synthase of Anaeromyxobacter sp. (strain Fw109-5).